Consider the following 587-residue polypeptide: Thioredoxin domain-containing protein 3 (587 aa).

A Thioredoxin domain is found at 2–119; that stretch reads ASKKREVQLQ…VIALIDEEKK (118 aa). Cys-39 and Cys-42 form a disulfide bridge. NDK regions lie at residues 157-255, 313-453, and 454-587; these read MAVI…PLEE, VQRT…STLA, and LIKP…NFEN.

It in the C-terminal section; belongs to the NDK family. Monomer. As to expression, testis-specific.

Its subcellular location is the cytoplasm. In terms of biological role, probably required during the final stages of sperm tail maturation in the testis and/or epididymis, where extensive disulfide bonding of fibrous sheath (FS) proteins occurs. In vitro, it has neither nucleoside diphosphate kinase (NDPK) activity nor reducing activity on disulfide bonds. Exhibits a 3'-5' exonuclease activity with a preference for single-stranded DNA, suggesting roles in DNA proofreading and repair. In Rattus norvegicus (Rat), this protein is Thioredoxin domain-containing protein 3 (Nme8).